The chain runs to 87 residues: U3-theraphotoxin-Hhn1a 8 (87 aa).

The signal sequence occupies residues 1 to 24 (MVNMKASMFLTFAGLVLLFVVCYA). Residues 25 to 52 (SGSEEKEFPKEMLSSIFAVDNDFKQEER) constitute a propeptide that is removed on maturation. 3 disulfides stabilise this stretch: C54-C67, C61-C72, and C66-C79.

The protein belongs to the neurotoxin 10 (Hwtx-1) family. 51 (Hntx-8) subfamily. Hntx-8 sub-subfamily. In terms of tissue distribution, expressed by the venom gland.

It is found in the secreted. Its function is as follows. Ion channel inhibitor. The protein is U3-theraphotoxin-Hhn1a 8 of Cyriopagopus hainanus (Chinese bird spider).